We begin with the raw amino-acid sequence, 60 residues long: Large ribosomal subunit protein bL32 (60 aa).

This sequence belongs to the bacterial ribosomal protein bL32 family.

This is Large ribosomal subunit protein bL32 (rpmF) from Borreliella burgdorferi (strain ATCC 35210 / DSM 4680 / CIP 102532 / B31) (Borrelia burgdorferi).